Reading from the N-terminus, the 102-residue chain is MEKSKRLFIKSKRSFRRRLPPIQSGDRIDYKNMGLICRFISEQGKILSRRVNRLTLKQQRLITIAIKQARILSSLPFLNNEKQFEKSESTEKITTLRKKNRN.

It belongs to the bacterial ribosomal protein bS18 family. As to quaternary structure, part of the 30S ribosomal subunit.

It is found in the plastid. The protein localises to the chloroplast. This chain is Small ribosomal subunit protein bS18c, found in Phaseolus vulgaris (Kidney bean).